Here is a 1183-residue protein sequence, read N- to C-terminus: MDAVNAFNQELFSLMDMKPPISRAKMILITKAAIKAIKLYKHVVQIVEKFIKKCKPEYKVPGLYVIDSIVRQSRHQFGTDKDVFGPRFSKNITATFQYLYLCPSEDKSKIVRVLNLWQKNGVFKIEIIQPLLDMAAGTSNAAPVAENVTNNEGSPPPPVKISSELAQAPTNSMPTVAQLPSSDAFAAVAQLFQTTQGQQLQQILQTFQQPPQPQSPALDSAVMAQVQAITAQLKTAPTQPPEQKTAFDKKLLDRFDYDDEPEAVEDSKKEDAAAISTAALATAAPPAPTAATPAVATAVPVPSATSPPPPQTPFGYPGDGVQQPAYTQHQSMDQFQPRMMPIQQDTMHHQVPLPPNGQMPGFGLLSAPPPFPPMPQPGMPQPGMAQPGLAQPGMAQPTMPQPGMPQPGMPQPGMAQPGLAQPGMAQPGMPQPAMPQPAMPQPGMAQPGVSPAPPVQPTFQSTFQPQNEPHSQKPHQQEMEVEQPCVTEVKRHVPESRKSRSRSPKRRRSRSGSRSRRSRHRRSRSRSRDRRRHSPRSRSQERRDREKERERRQKGLPQIKSETASVCSTTLWVGQLDKRTTQQDVASLLEEFGPIESINMIPPRGCAYIVMVHRQDAYRALQKLSRGNYKVNQKSIKIAWALNKGIKADYKQYWDVELGVTYIPWDKVKAEELESFCEGGMLDSDTLNPDWKGIPKKPDNEVAQNGGAETSHTEPVSPIPKPVPVPVPPIPVPAPITVPPPQVPPHQPGPPVVGALQPPAFTPPLGMPPPGFGPGVPPPPPPPPFLRPGFNPMHLPPGFLPPGPPPPITPPVSIPPPHTPPISIPNLVSGARGNAESGDSAKMYGSAGPPAAPTSLPTPPVTQPVSLLGTQGVAPGPVIGLQAPSTGLLGARPGLIPLQRPPGMPPPHLQRFPMMPPRPMPPHMMHRGPPPGPGGFAMPPPHGMKGPFPPHGPFVRPGGMPGLGGPGPGPGASEDRDGRQQQPQQQPPPQQQQQQQQPQQQPPQQSPSQQPAPAQQQPPQFRNDSRQQFNSGRDQERFGRRSFGSRVENDRERYGSRNDDRDNSNRERREWGRRSPDRDRHRDLEERSRRSSGHRDRDRDSRDRESRREKEENRKEKHEVADRAGGNKAVEPPLSQVGTIDTVSELNKGEAMATVVKPEESPAEVTSPVGPEKDPGSAAEPPR.

The region spanning 1–139 is the CID domain; it reads MDAVNAFNQE…PLLDMAAGTS (139 aa). Residue K49 is modified to N6-acetyllysine. Phosphoserine is present on S154. Disordered stretches follow at residues 299–324 and 348–561; these read VPVP…VQQP and HHQV…QIKS. Pro residues predominate over residues 367–380; sequence APPPFPPMPQPGMP. Positions 381–398 are enriched in low complexity; it reads QPGMAQPGLAQPGMAQPT. A compositionally biased stretch (pro residues) spans 399-410; the sequence is MPQPGMPQPGMP. The segment covering 411–428 has biased composition (low complexity); the sequence is QPGMAQPGLAQPGMAQPG. The segment covering 429 to 440 has biased composition (pro residues); that stretch reads MPQPAMPQPAMP. Polar residues predominate over residues 457 to 469; sequence PTFQSTFQPQNEP. Residues 488-498 are compositionally biased toward basic and acidic residues; it reads EVKRHVPESRK. The span at 499 to 536 shows a compositional bias: basic residues; it reads SRSRSPKRRRSRSGSRSRRSRHRRSRSRSRDRRRHSPR. Positions 538 to 553 are enriched in basic and acidic residues; the sequence is RSQERRDREKERERRQ. Residues 569–643 form the RRM domain; that stretch reads TTLWVGQLDK…KSIKIAWALN (75 aa). Disordered regions lie at residues 691-722, 800-858, and 920-1183; these read WKGI…IPKP, LPPG…SLPT, and MPPH…EPPR. Phosphoserine is present on S717. Pro residues-rich tracts occupy residues 800 to 823 and 920 to 952; these read LPPG…PPIS and MPPH…PPHG. Residues 1006–1020 are compositionally biased toward low complexity; the sequence is SPSQQPAPAQQQPPQ. S1042 carries the post-translational modification Phosphoserine. Basic and acidic residues predominate over residues 1047 to 1122; the sequence is VENDRERYGS…NRKEKHEVAD (76 aa). Over residues 1136–1145 the composition is skewed to polar residues; that stretch reads QVGTIDTVSE.

In terms of assembly, interacts with POLR2A; via C-terminal heptapeptide repeat domain (CTD) phosphorylated at 'Ser-2' and 'Ser-5'.

Its subcellular location is the nucleus. Functionally, anti-terminator protein required to prevent early mRNA termination during transcription. Together with SCAF8, acts by suppressing the use of early, alternative poly(A) sites, thereby preventing the accumulation of non-functional truncated proteins. Mechanistically, associates with the phosphorylated C-terminal heptapeptide repeat domain (CTD) of the largest RNA polymerase II subunit (POLR2A), and subsequently binds nascent RNA upstream of early polyadenylation sites to prevent premature mRNA transcript cleavage and polyadenylation. Independently of SCAF8, also acts as a suppressor of transcriptional readthrough. The polypeptide is SR-related and CTD-associated factor 4 (Mus musculus (Mouse)).